A 486-amino-acid polypeptide reads, in one-letter code: N-succinylglutamate 5-semialdehyde dehydrogenase (486 aa).

Residue 220-225 (GSSRTG) participates in NAD(+) binding. Residues glutamate 243 and cysteine 277 contribute to the active site.

Belongs to the aldehyde dehydrogenase family. AstD subfamily.

The catalysed reaction is N-succinyl-L-glutamate 5-semialdehyde + NAD(+) + H2O = N-succinyl-L-glutamate + NADH + 2 H(+). It functions in the pathway amino-acid degradation; L-arginine degradation via AST pathway; L-glutamate and succinate from L-arginine: step 4/5. Catalyzes the NAD-dependent reduction of succinylglutamate semialdehyde into succinylglutamate. The protein is N-succinylglutamate 5-semialdehyde dehydrogenase of Shewanella sp. (strain W3-18-1).